Consider the following 336-residue polypeptide: Dihydroorotate dehydrogenase (quinone) (336 aa).

FMN-binding positions include 62–66 (AGLDK) and T86. Position 66 (K66) interacts with substrate. 111-115 (NRMGF) lines the substrate pocket. FMN is bound by residues N139 and N172. A substrate-binding site is contributed by N172. Catalysis depends on S175, which acts as the Nucleophile. Position 177 (N177) interacts with substrate. The FMN site is built by K217 and T245. 246-247 (NT) lines the substrate pocket. FMN-binding positions include G268, G297, and 318–319 (YS).

The protein belongs to the dihydroorotate dehydrogenase family. Type 2 subfamily. As to quaternary structure, monomer. The cofactor is FMN.

It is found in the cell membrane. It carries out the reaction (S)-dihydroorotate + a quinone = orotate + a quinol. It participates in pyrimidine metabolism; UMP biosynthesis via de novo pathway; orotate from (S)-dihydroorotate (quinone route): step 1/1. Functionally, catalyzes the conversion of dihydroorotate to orotate with quinone as electron acceptor. This chain is Dihydroorotate dehydrogenase (quinone), found in Pectobacterium carotovorum subsp. carotovorum (strain PC1).